The primary structure comprises 344 residues: Anthranilate phosphoribosyltransferase (344 aa).

5-phospho-alpha-D-ribose 1-diphosphate is bound by residues Gly84, 87–88, Thr92, 94–97, 112–120, and Ser124; these read GD, NIST, and KHGGRSVSS. Position 84 (Gly84) interacts with anthranilate. Residue Ser96 coordinates Mg(2+). Arg170 lines the anthranilate pocket. Residues Asp229 and Glu230 each coordinate Mg(2+).

Belongs to the anthranilate phosphoribosyltransferase family. Homodimer. The cofactor is Mg(2+).

It carries out the reaction N-(5-phospho-beta-D-ribosyl)anthranilate + diphosphate = 5-phospho-alpha-D-ribose 1-diphosphate + anthranilate. Its pathway is amino-acid biosynthesis; L-tryptophan biosynthesis; L-tryptophan from chorismate: step 2/5. Catalyzes the transfer of the phosphoribosyl group of 5-phosphorylribose-1-pyrophosphate (PRPP) to anthranilate to yield N-(5'-phosphoribosyl)-anthranilate (PRA). The sequence is that of Anthranilate phosphoribosyltransferase from Janthinobacterium sp. (strain Marseille) (Minibacterium massiliensis).